Reading from the N-terminus, the 257-residue chain is Ribosomal RNA small subunit methyltransferase J (257 aa).

S-adenosyl-L-methionine contacts are provided by residues 107 to 108 (RD), 123 to 124 (ER), and Asp-177.

This sequence belongs to the methyltransferase superfamily. RsmJ family.

The protein resides in the cytoplasm. The enzyme catalyses guanosine(1516) in 16S rRNA + S-adenosyl-L-methionine = N(2)-methylguanosine(1516) in 16S rRNA + S-adenosyl-L-homocysteine + H(+). Its function is as follows. Specifically methylates the guanosine in position 1516 of 16S rRNA. In Haemophilus influenzae (strain PittEE), this protein is Ribosomal RNA small subunit methyltransferase J.